A 218-amino-acid chain; its full sequence is Thiopurine S-methyltransferase (218 aa).

Positions 10, 45, 66, and 123 each coordinate S-adenosyl-L-methionine.

It belongs to the class I-like SAM-binding methyltransferase superfamily. TPMT family.

The protein localises to the cytoplasm. It carries out the reaction S-adenosyl-L-methionine + a thiopurine = S-adenosyl-L-homocysteine + a thiopurine S-methylether.. This chain is Thiopurine S-methyltransferase, found in Shewanella amazonensis (strain ATCC BAA-1098 / SB2B).